The primary structure comprises 207 residues: Urease accessory protein UreG (207 aa).

14–21 is a binding site for GTP; sequence GPVGSGKT.

It belongs to the SIMIBI class G3E GTPase family. UreG subfamily. In terms of assembly, homodimer. UreD, UreF and UreG form a complex that acts as a GTP-hydrolysis-dependent molecular chaperone, activating the urease apoprotein by helping to assemble the nickel containing metallocenter of UreC. The UreE protein probably delivers the nickel.

It is found in the cytoplasm. Functionally, facilitates the functional incorporation of the urease nickel metallocenter. This process requires GTP hydrolysis, probably effectuated by UreG. The chain is Urease accessory protein UreG from Rhodopseudomonas palustris (strain BisB18).